A 176-amino-acid chain; its full sequence is Translation initiation factor IF-3 (176 aa).

It belongs to the IF-3 family. In terms of assembly, monomer.

The protein resides in the cytoplasm. In terms of biological role, IF-3 binds to the 30S ribosomal subunit and shifts the equilibrium between 70S ribosomes and their 50S and 30S subunits in favor of the free subunits, thus enhancing the availability of 30S subunits on which protein synthesis initiation begins. The polypeptide is Translation initiation factor IF-3 (Rippkaea orientalis (strain PCC 8801 / RF-1) (Cyanothece sp. (strain PCC 8801))).